Consider the following 338-residue polypeptide: uncharacterized protein (338 aa).

Helical transmembrane passes span Ile-11–Ile-31, Ile-249–Ala-269, and Val-318–Leu-338.

The protein resides in the cell membrane. This is an uncharacterized protein from Methanocaldococcus jannaschii (strain ATCC 43067 / DSM 2661 / JAL-1 / JCM 10045 / NBRC 100440) (Methanococcus jannaschii).